Reading from the N-terminus, the 435-residue chain is Protein lin-54 (435 aa).

The segment at 73–136 (DEPIDTSSHR…PASLPRTVQP (64 aa)) is disordered. Over residues 102–120 (TPGSSQYTVRNLSNLSGSP) the composition is skewed to polar residues. Residues 173-288 (QRKPCNCTKS…KCKGCQNTET (116 aa)) form the CRC domain. The DNA-binding stretch occupies residues 175–188 (KPCNCTKSQCLKLY). Zn(2+)-binding residues include Cys-177, Cys-179, Cys-184, Cys-189, Cys-191, Cys-198, Cys-201, Cys-203, and Cys-206. Residues 235 to 250 (IGIARGGITDIERLHQ) are linker. Positions 253, 255, 260, 265, 267, 274, 278, 280, and 283 each coordinate Zn(2+). Positions 253–266 (CHCKKSGCLKNYCE) are DNA-binding. Positions 415–435 (LTQDLDAAPTDDIPGPSTSTS) are disordered.

This sequence belongs to the lin-54 family. As to quaternary structure, component of the DRM complex, at least composed of lin-9, lin-35, lin-37, lin-52, lin-53, lin-54- dpl-1 and efl-1.

The protein resides in the nucleus. The protein localises to the chromosome. In terms of biological role, synthetic multivulva class B (synMuvB) protein. SynMuvB proteins are required to repress the induction of vulval development by Ras signaling and probably act by forming the multiprotein DRM complex that repress transcription. The sequence is that of Protein lin-54 from Caenorhabditis elegans.